A 295-amino-acid chain; its full sequence is Ornithine carbamoyltransferase, catabolic (295 aa).

Residues 49–52, Q76, R100, and 127–130 contribute to the carbamoyl phosphate site; these read STRT and HPCQ. L-ornithine is bound by residues N155, D213, and 217-218; that span reads SM. Carbamoyl phosphate-binding positions include 253-254 and R281; that span reads CL.

It belongs to the aspartate/ornithine carbamoyltransferase superfamily. OTCase family. In terms of assembly, homohexamer.

It is found in the cytoplasm. It carries out the reaction carbamoyl phosphate + L-ornithine = L-citrulline + phosphate + H(+). It functions in the pathway amino-acid degradation; L-arginine degradation via ADI pathway; carbamoyl phosphate from L-arginine: step 2/2. Arginine lead to a slight activation. Inhibited by all nucleotide phosphates. Functionally, reversibly catalyzes the transfer of the carbamoyl group from carbamoyl phosphate (CP) to the N(epsilon) atom of ornithine (ORN) to produce L-citrulline. The protein is Ornithine carbamoyltransferase, catabolic (arcB) of Halobacterium salinarum (strain ATCC 700922 / JCM 11081 / NRC-1) (Halobacterium halobium).